Consider the following 335-residue polypeptide: Ubiquinone biosynthesis protein COQ4, mitochondrial (335 aa).

The N-terminal 10 residues, 1–10, are a transit peptide targeting the mitochondrion; the sequence is MLRLSLLRST. Zn(2+)-binding residues include H210, D211, H214, and E226.

The protein belongs to the COQ4 family. In terms of assembly, component of a multi-subunit COQ enzyme complex, composed of at least COQ3, COQ4, COQ5, COQ6, COQ7 and COQ9. Interacts with COQ3. Requires Zn(2+) as cofactor.

It localises to the mitochondrion inner membrane. It carries out the reaction 4-hydroxy-3-methoxy-5-(all-trans-hexaprenyl)benzoate + H(+) = 2-methoxy-6-(all-trans-hexaprenyl)phenol + CO2. It functions in the pathway cofactor biosynthesis; ubiquinone biosynthesis. In terms of biological role, lyase that catalyzes the C1-decarboxylation of 4-hydroxy-3-methoxy-5-(all-trans-hexaprenyl)benzoic acid into 2-methoxy-6-(all-trans-hexaprenyl)phenol during ubiquinone biosynthesis. This is Ubiquinone biosynthesis protein COQ4, mitochondrial from Saccharomyces cerevisiae (strain YJM789) (Baker's yeast).